We begin with the raw amino-acid sequence, 100 residues long: Small ribosomal subunit protein uS14c (100 aa).

It belongs to the universal ribosomal protein uS14 family. Part of the 30S ribosomal subunit.

It is found in the plastid. The protein resides in the cyanelle. In terms of biological role, binds 16S rRNA, required for the assembly of 30S particles. This is Small ribosomal subunit protein uS14c from Cyanophora paradoxa.